The primary structure comprises 143 residues: Nitrosuccinic acid decarboxylase npaB (143 aa).

This sequence belongs to the carboxymuconolactone decarboxylase family. Mg(2+) serves as cofactor.

It participates in mycotoxin biosynthesis. Its function is as follows. Nitrosuccinic acid decarboxylase; part of the gene cluster that mediates the biosynthesis of the deadly neurotoxic nitroalkane 3-nitropropanoic acid (3-NPA) that acts as an antimetabolite of succinate and irreversibly inhibits succinate dehydrogenase and disrupts mitochondrial oxidative phosphorylation. NpaB facilitates decarboxylation of nitrosuccinic acid produced by the nitrosuccinic acid synthase npaA to yield the final product of the cluster, the lethal mycotoxin 3-NPA. The protein is Nitrosuccinic acid decarboxylase npaB of Metarhizium robertsii (strain ARSEF 23 / ATCC MYA-3075) (Metarhizium anisopliae (strain ARSEF 23)).